The chain runs to 352 residues: tRNA pseudouridine synthase D (352 aa).

Aspartate 81 serves as the catalytic Nucleophile. One can recognise a TRUD domain in the interval 157-303; the sequence is GVPNYFGTQR…MDHERRILRL (147 aa).

This sequence belongs to the pseudouridine synthase TruD family.

It catalyses the reaction uridine(13) in tRNA = pseudouridine(13) in tRNA. Its function is as follows. Responsible for synthesis of pseudouridine from uracil-13 in transfer RNAs. The protein is tRNA pseudouridine synthase D of Pseudomonas putida (strain ATCC 700007 / DSM 6899 / JCM 31910 / BCRC 17059 / LMG 24140 / F1).